The following is a 138-amino-acid chain: Basic phospholipase A2 myotoxin I (138 aa).

The first 16 residues, 1 to 16 (MRTLWIMAVLLVGVEG), serve as a signal peptide directing secretion. Intrachain disulfides connect Cys-42-Cys-131, Cys-44-Cys-60, Cys-59-Cys-111, Cys-65-Cys-138, Cys-66-Cys-104, Cys-73-Cys-97, and Cys-91-Cys-102. Ca(2+) contacts are provided by Tyr-43, Gly-45, and Gly-47. His-63 is a catalytic residue. Asp-64 provides a ligand contact to Ca(2+). Asp-105 is a catalytic residue.

The protein belongs to the phospholipase A2 family. Group II subfamily. D49 sub-subfamily. As to quaternary structure, monomer. Homodimer; non-covalently linked (alternative/compact dimer conformation). The cofactor is Ca(2+). As to expression, expressed by the venom gland.

The protein resides in the secreted. It carries out the reaction a 1,2-diacyl-sn-glycero-3-phosphocholine + H2O = a 1-acyl-sn-glycero-3-phosphocholine + a fatty acid + H(+). With respect to regulation, high level of membrane cholesterol content reduces cytolytic activity, whereas low level of membrane cholesterol content increases cytolytic activity. Its function is as follows. Snake venom phospholipase A2 (PLA2) that displays local myotoxic activity. It also displays anticoagulant action in plasma and edema-inducing activities. In addition, it shows cytotoxic activity to a variety of cell types and bactericidal activity to a variety of Gram-negative and Gram-positive bacteria. PLA2 catalyzes the calcium-dependent hydrolysis of the 2-acyl groups in 3-sn-phosphoglycerides. The sequence is that of Basic phospholipase A2 myotoxin I from Bothrops asper (Terciopelo).